The primary structure comprises 507 residues: Maturase K (507 aa).

Belongs to the intron maturase 2 family. MatK subfamily.

The protein localises to the plastid. It is found in the chloroplast. Usually encoded in the trnK tRNA gene intron. Probably assists in splicing its own and other chloroplast group II introns. The polypeptide is Maturase K (Lens culinaris (Lentil)).